The chain runs to 261 residues: CD40 ligand (261 aa).

The Cytoplasmic portion of the chain corresponds to 1–22 (MIETYNQPVPRSAATGPPVSMK). A helical; Signal-anchor for type II membrane protein transmembrane segment spans residues 23-43 (IFMYLLTVFLITQMIGSALFA). The Extracellular portion of the chain corresponds to 44 to 261 (VYLHRRLDKI…GFTSFGLLKL (218 aa)). A THD domain is found at 122–261 (IAAHVISEAS…GFTSFGLLKL (140 aa)). Residues cysteine 178 and cysteine 218 are joined by a disulfide bond. A glycan (N-linked (GlcNAc...) asparagine) is linked at asparagine 240.

This sequence belongs to the tumor necrosis factor family. In terms of assembly, homotrimer. Interacts with CD28. CD40 ligand, soluble form: Exists as either a monomer or a homotrimer. Forms a ternary complex between CD40 and integrins for CD40-CD40LG signaling. Post-translationally, the soluble form derives from the membrane form by proteolytic processing.

It localises to the cell membrane. Its subcellular location is the cell surface. The protein localises to the secreted. Functionally, cytokine that acts as a ligand to CD40/TNFRSF5. Costimulates T-cell proliferation and cytokine production. Its cross-linking on T-cells generates a costimulatory signal which enhances the production of IL4 and IL10 in conjunction with the TCR/CD3 ligation and CD28 costimulation. Induces the activation of NF-kappa-B. Induces the activation of kinases MAPK8 and PAK2 in T-cells. Mediates B-cell proliferation in the absence of co-stimulus as well as IgE production in the presence of IL4. Involved in immunoglobulin class switching. In terms of biological role, acts as a ligand for integrins, specifically ITGA5:ITGB1 and ITGAV:ITGB3; both integrins and the CD40 receptor are required for activation of CD40-CD40LG signaling, which have cell-type dependent effects, such as B-cell activation, NF-kappa-B signaling and anti-apoptotic signaling. This is CD40 ligand (CD40LG) from Callithrix jacchus (White-tufted-ear marmoset).